The following is a 169-amino-acid chain: Peptide deformylase 1 (169 aa).

Fe cation is bound by residues Cys-91 and His-133. Residue Glu-134 is part of the active site. His-137 serves as a coordination point for Fe cation.

It belongs to the polypeptide deformylase family. Requires Fe(2+) as cofactor.

The enzyme catalyses N-terminal N-formyl-L-methionyl-[peptide] + H2O = N-terminal L-methionyl-[peptide] + formate. In terms of biological role, removes the formyl group from the N-terminal Met of newly synthesized proteins. Requires at least a dipeptide for an efficient rate of reaction. N-terminal L-methionine is a prerequisite for activity but the enzyme has broad specificity at other positions. The sequence is that of Peptide deformylase 1 from Vibrio cholerae serotype O1 (strain ATCC 39315 / El Tor Inaba N16961).